We begin with the raw amino-acid sequence, 420 residues long: Dynein axonemal assembly factor 4 (420 aa).

One can recognise a CS domain in the interval 3 to 87 (LQVSDYSWQQ…KEAAMWETLS (85 aa)). Residues 7-103 (DYSWQQTKTA…ETMQRIREKS (97 aa)) are mediates interaction with ESR1 and STUB1. TPR repeat units lie at residues 290-323 (PEWL…NNKM), 324-357 (PLLY…LMPP), and 366-399 (MKAH…DPSN).

As to quaternary structure, interacts with ZMYND10. Interacts with STUB1. Interacts with ESR1 and ESR2. Interacts with DNAAF2. Interacts with CCT3, CCT4, CCT5 and CCT8. Interacts with DNAAF6/PIH1D3.

It localises to the nucleus. It is found in the cytoplasm. Its subcellular location is the cell projection. The protein localises to the neuron projection. The protein resides in the dynein axonemal particle. In terms of biological role, involved in neuronal migration during development of the cerebral neocortex. May regulate the stability and proteasomal degradation of the estrogen receptors that play an important role in neuronal differentiation, survival and plasticity. Axonemal dynein assembly factor required for ciliary motility. The protein is Dynein axonemal assembly factor 4 of Pongo pygmaeus (Bornean orangutan).